The following is a 526-amino-acid chain: Spermatogenesis-associated protein 7 homolog (526 aa).

Residues 203–240 are disordered; the sequence is DFSDQRMEAETQTELSSFNSELGTAEKKSSKDSDVSIK. Residues 212–224 are compositionally biased toward polar residues; sequence ETQTELSSFNSEL. The span at 226 to 237 shows a compositional bias: basic and acidic residues; sequence TAEKKSSKDSDV.

In terms of assembly, found in a complex with CFAP410, NEK1 and SPATA7. Interacts with NEK1. Interacts with RPGRIP1. Interacts with RPGR. Interacts with NPHP4. Interacts with NPHP1. Interacts with AHI1. In early prophase of primary spermatocytes.

Its subcellular location is the cytoplasm. It localises to the cytoskeleton. The protein localises to the cilium axoneme. It is found in the cilium basal body. The protein resides in the cell projection. Its subcellular location is the cilium. It localises to the photoreceptor outer segment. In terms of biological role, involved in the maintenance of both rod and cone photoreceptor cells. Required for photoreceptor-specific localization of proximal connecting cilium (CC) proteins RPGR, AHI1, NPHP1, NPHP4, and RPGRIP1 at the distal CC, a photoreceptor-specific extension of the primary cilium transition zone. Maintenance of protein localization at the photoreceptor-specific distal CC is essential for normal microtubule stability and to prevent photoreceptor degeneration. The protein is Spermatogenesis-associated protein 7 homolog (Spata7) of Rattus norvegicus (Rat).